Here is a 1080-residue protein sequence, read N- to C-terminus: MSMDHQDLKRRDPPADSESQRPSKKISLSSSEASVPIGGPPIDQNLILFQNRAMKVRVEEQKIEINDREQKIKQLNTKIHQYKENISCLCRVWDQLNSGLDLLINRVDFENAMDNLLPKDNITESFEFLSSYITEPVTLDEKYTLDQSLQKKVQKTQSTFSKISKALEKEHTLSKFVFRLLKSKDGIKSNDIEKLLKEDNDKLSKQNQYIQNIYDKVQIQFKQLTDQTTHLADQAAIYQQNNKELKLELEKSQDELTIERKRVIKLQDETLRTPQVKIPSPSLGSNIPGGANNNNNNNNNSNNNNNINNNGNNMGGSGSSSLASSTNGINKQQSNDINGKELTHEELIAELQRQSDSRLLEARKLREEKAILLKELQQIQIDIRVIPEERIQNSMPYQVLRQRYQLVSDELDIHRNQCTKLQNDLAQATIGRRLEREALEAFEAHRRQNIERRVSQLEVESIELKGEKEKLVCLIEQRNPNVPSLQYIQESRLLLDKKDDEIKQLRKEIEQLKLDIEKYKAPKEEIERYKLLVQRDVESKNIEINKLLEKINTITKQNNDLKSNEQQLLQKESELTLSLNILKSNKNNININNLDKDNIEDNSKIKQQQEQQQQQHQKIDNNNKKEEEIKKEQQQQQQQQQQQQQQQQQQQQQQQQQQQQQQQQQQQQQQQQQQQQQQQEEQKKDKEMIDIEKSTENIINNNNNNNTNEQKLNEINKNIENGNNENNNNNENTINNENTINNNNNENKDKIIFNLELNESKLKLELSTVKKQLEDITKSKEEYDNEIKEINEKFKAQIKELDITISQNKIQQESQKQELEALVMEIDSMGKAYEQMLEQNTRLTKQLSDKEDTHAHLMAENIKSQQTIRNSKEIQLAIEEKLNRNEEKLKSQGELMQKIEEKSNILQKQLSKVTEDLHSCSFDLEKHKRFVRENNAHSLELKTQLDHLSNLNAELKKKADDSIFALEREIDKAKRLDEEKQLLKKKLEKATSANNNNNNNNNNNNNNNNNNSSSSEEELKLINQRLRCTICNDRQKNYVIAKCFHVFCKECIYSNIDTRKRRCPSCNRAFAETDVHQIYY.

The span at 1–21 shows a compositional bias: basic and acidic residues; that stretch reads MSMDHQDLKRRDPPADSESQR. A disordered region spans residues 1–37; it reads MSMDHQDLKRRDPPADSESQRPSKKISLSSSEASVPI. Low complexity predominate over residues 25–34; that stretch reads KISLSSSEAS. Coiled-coil stretches lie at residues 50 to 91, 149 to 169, and 196 to 269; these read QNRA…CLCR, LQKKVQKTQSTFSKISKALEK, and LKED…LQDE. Disordered stretches follow at residues 274–335, 721–742, and 991–1016; these read PQVK…QQSN, NGNNENNNNNENTINNENTINN, and TSANNNNNNNNNNNNNNNNNNSSSSE. Low complexity-rich tracts occupy residues 284-312 and 319-330; these read GSNIPGGANNNNNNNNNSNNNNNINNNGN and SSSLASSTNGIN. The stretch at 331–1003 forms a coiled coil; that stretch reads KQQSNDINGK…NNNNNNNNNN (673 aa). The segment covering 994 to 1014 has biased composition (low complexity); it reads NNNNNNNNNNNNNNNNNNSSS. The RING-type zinc finger occupies 1028–1067; it reads CTICNDRQKNYVIAKCFHVFCKECIYSNIDTRKRRCPSCN.

This sequence belongs to the BRE1 family.

It localises to the nucleus. It carries out the reaction S-ubiquitinyl-[E2 ubiquitin-conjugating enzyme]-L-cysteine + [acceptor protein]-L-lysine = [E2 ubiquitin-conjugating enzyme]-L-cysteine + N(6)-ubiquitinyl-[acceptor protein]-L-lysine.. Its pathway is protein modification; protein ubiquitination. Functionally, E3 ubiquitin-protein ligase that mediates monoubiquitination of histone H2B. The polypeptide is Probable E3 ubiquitin-protein ligase bre1 (bre1) (Dictyostelium discoideum (Social amoeba)).